Reading from the N-terminus, the 397-residue chain is 1-deoxy-D-xylulose 5-phosphate reductoisomerase (397 aa).

The NADPH site is built by T12, G13, S14, I15, G38, K39, N40, and N126. 1-deoxy-D-xylulose 5-phosphate is bound at residue K127. An NADPH-binding site is contributed by E128. Residue D152 coordinates Mn(2+). 1-deoxy-D-xylulose 5-phosphate-binding residues include S153, E154, S188, and H211. E154 is a Mn(2+) binding site. G217 is a binding site for NADPH. Residues S224, N229, K230, and E233 each contribute to the 1-deoxy-D-xylulose 5-phosphate site. Residue E233 coordinates Mn(2+).

Belongs to the DXR family. Requires Mg(2+) as cofactor. Mn(2+) is required as a cofactor.

It carries out the reaction 2-C-methyl-D-erythritol 4-phosphate + NADP(+) = 1-deoxy-D-xylulose 5-phosphate + NADPH + H(+). Its pathway is isoprenoid biosynthesis; isopentenyl diphosphate biosynthesis via DXP pathway; isopentenyl diphosphate from 1-deoxy-D-xylulose 5-phosphate: step 1/6. Functionally, catalyzes the NADPH-dependent rearrangement and reduction of 1-deoxy-D-xylulose-5-phosphate (DXP) to 2-C-methyl-D-erythritol 4-phosphate (MEP). In Haemophilus influenzae (strain PittEE), this protein is 1-deoxy-D-xylulose 5-phosphate reductoisomerase.